A 1226-amino-acid chain; its full sequence is Chromosome partition protein Smc (1226 aa).

32–39 (PNGCGKSN) lines the ATP pocket. Coiled coils occupy residues 173 to 231 (ITKF…IKRN) and 269 to 491 (NSLE…SKSL). The region spanning 527–635 (YQLLGNLIQC…FDGYFIASKF (109 aa)) is the SMC hinge domain. Coiled-coil stretches lie at residues 679–741 (QGVV…AAKK), 775–965 (MLES…LREA), and 1006–1078 (HRRY…KSKE).

It belongs to the SMC family. As to quaternary structure, homodimer.

It localises to the cytoplasm. In terms of biological role, required for chromosome condensation and partitioning. The chain is Chromosome partition protein Smc from Halobacteriovorax marinus (strain ATCC BAA-682 / DSM 15412 / SJ) (Bacteriovorax marinus).